A 215-amino-acid polypeptide reads, in one-letter code: ATP-dependent Clp protease proteolytic subunit (215 aa).

Ser111 acts as the Nucleophile in catalysis. His136 is an active-site residue.

It belongs to the peptidase S14 family. As to quaternary structure, fourteen ClpP subunits assemble into 2 heptameric rings which stack back to back to give a disk-like structure with a central cavity, resembling the structure of eukaryotic proteasomes.

It localises to the cytoplasm. The catalysed reaction is Hydrolysis of proteins to small peptides in the presence of ATP and magnesium. alpha-casein is the usual test substrate. In the absence of ATP, only oligopeptides shorter than five residues are hydrolyzed (such as succinyl-Leu-Tyr-|-NHMec, and Leu-Tyr-Leu-|-Tyr-Trp, in which cleavage of the -Tyr-|-Leu- and -Tyr-|-Trp bonds also occurs).. Cleaves peptides in various proteins in a process that requires ATP hydrolysis. Has a chymotrypsin-like activity. Plays a major role in the degradation of misfolded proteins. The sequence is that of ATP-dependent Clp protease proteolytic subunit from Hamiltonella defensa subsp. Acyrthosiphon pisum (strain 5AT).